Here is a 153-residue protein sequence, read N- to C-terminus: 3-hydroxyacyl-[acyl-carrier-protein] dehydratase FabZ (153 aa).

His56 is a catalytic residue.

This sequence belongs to the thioester dehydratase family. FabZ subfamily.

The protein resides in the cytoplasm. The enzyme catalyses a (3R)-hydroxyacyl-[ACP] = a (2E)-enoyl-[ACP] + H2O. Functionally, involved in unsaturated fatty acids biosynthesis. Catalyzes the dehydration of short chain beta-hydroxyacyl-ACPs and long chain saturated and unsaturated beta-hydroxyacyl-ACPs. This is 3-hydroxyacyl-[acyl-carrier-protein] dehydratase FabZ from Nitrosomonas europaea (strain ATCC 19718 / CIP 103999 / KCTC 2705 / NBRC 14298).